A 161-amino-acid polypeptide reads, in one-letter code: Cytochrome c-type biogenesis protein CcmE (161 aa).

The Cytoplasmic segment spans residues 1–8 (MNPRRKKR). The helical; Signal-anchor for type II membrane protein transmembrane segment at 9 to 29 (LTLAIALIGGVAAIASLLLYA) threads the bilayer. Topologically, residues 30 to 161 (LNSNLNLFYT…DYSQQKSAAQ (132 aa)) are periplasmic. Residues H131 and Y135 each contribute to the heme site. A disordered region spans residues 138-161 (PEVAEAMGQKHEKLDYSQQKSAAQ).

It belongs to the CcmE/CycJ family.

It localises to the cell inner membrane. Functionally, heme chaperone required for the biogenesis of c-type cytochromes. Transiently binds heme delivered by CcmC and transfers the heme to apo-cytochromes in a process facilitated by CcmF and CcmH. This is Cytochrome c-type biogenesis protein CcmE from Shewanella sp. (strain MR-4).